The chain runs to 552 residues: MIKTWIRCLTTEVRYHQPNAHGRSLVMSVLNSTVTKREAKDYLNKYTDENNHHYCLVFLRHLSEYSDNVLSGFSKTVSRIQTLGLRPILIVDPLCQDISYQSQRLDNHLHDQSLKSIIVLDPITIGERGSIDVKLPILNPHIIPIIEPYQYHEKEAFKKLAGDPSRFLSSLVSNLPINIDKVFLISKYGGLPSVERHTNSHVFVNLSQEYRELRNSYQNQLEKLESIQVDNTEKNLVESLQLFLNQDKILSNSDQLKCHMEDLEIMNKTLSVLPHSSTGLITTILAGSKLSDNNPLVYNILTDRSLISSSLPRFKRSAAAQSKSWYELPSSNVEEEVTSANDSVLVTTVFKKGIDIHIFDFRTLTDDNSIGLPPSQATQTGKSDPVSKKLDLNKLNGIINSSFKRSLDLSHYLGRINGNIASIIVIGDYEGIAILTYEGPKDKQFVYLDKFAVAQKLKGSLGISDIIFNLMFRKFPHELIWRSREDNVVNKWYFQRSTGVLHLSLDLGNDDQKQSIFKLFYYGNPESESFHNVERLRDYAKYVRDITPSWHK.

The N-terminal 32 residues, 1–32, are a transit peptide targeting the mitochondrion; the sequence is MIKTWIRCLTTEVRYHQPNAHGRSLVMSVLNS. The 167-residue stretch at 379–545 folds into the N-acetyltransferase domain; that stretch reads QTGKSDPVSK…LRDYAKYVRD (167 aa).

Belongs to the acetyltransferase family.

The protein resides in the mitochondrion. The catalysed reaction is L-glutamate + acetyl-CoA = N-acetyl-L-glutamate + CoA + H(+). The protein operates within amino-acid biosynthesis; L-arginine biosynthesis; N(2)-acetyl-L-ornithine from L-glutamate: step 1/4. Its function is as follows. N-acetylglutamate synthase involved in arginine biosynthesis. The protein is Amino-acid acetyltransferase, mitochondrial (ARG2) of Kluyveromyces lactis (strain ATCC 8585 / CBS 2359 / DSM 70799 / NBRC 1267 / NRRL Y-1140 / WM37) (Yeast).